A 407-amino-acid polypeptide reads, in one-letter code: GTPase Obg (407 aa).

Positions 1-159 (MKFVDEVSIR…RDLKLEMKVL (159 aa)) constitute an Obg domain. The tract at residues 128–148 (TRFKSSTNRAPRQTTPGKPGE) is disordered. The span at 129–143 (RFKSSTNRAPRQTTP) shows a compositional bias: polar residues. The OBG-type G domain maps to 160–333 (ADVGLLGLPN…LTRDIMRYLE (174 aa)). Residues 166-173 (GLPNAGKS), 191-195 (FTTLV), 213-216 (DIPG), 283-286 (NKCD), and 314-316 (SAI) contribute to the GTP site. Serine 173 and threonine 193 together coordinate Mg(2+). The interval 376–407 (SGVKSVHDIGDDDWDEEDVDDEDGPEIIYVRD) is disordered. Positions 385–400 (GDDDWDEEDVDDEDGP) are enriched in acidic residues.

The protein belongs to the TRAFAC class OBG-HflX-like GTPase superfamily. OBG GTPase family. Monomer. It depends on Mg(2+) as a cofactor.

The protein localises to the cytoplasm. Its function is as follows. An essential GTPase which binds GTP, GDP and possibly (p)ppGpp with moderate affinity, with high nucleotide exchange rates and a fairly low GTP hydrolysis rate. Plays a role in control of the cell cycle, stress response, ribosome biogenesis and in those bacteria that undergo differentiation, in morphogenesis control. In Pseudomonas fluorescens (strain Pf0-1), this protein is GTPase Obg.